The chain runs to 61 residues: UPF0370 protein Spro_3503 (61 aa).

A helical transmembrane segment spans residues 3–23 (WLADYWWIILLILVGMIISGI). The segment covering 38-48 (KPELPPHRDNN) has biased composition (basic and acidic residues). Residues 38-61 (KPELPPHRDNNAEWDDDDDWPKKK) are disordered. Residues 49 to 61 (AEWDDDDDWPKKK) show a composition bias toward acidic residues.

The protein belongs to the UPF0370 family.

It localises to the cell membrane. This is UPF0370 protein Spro_3503 from Serratia proteamaculans (strain 568).